The chain runs to 142 residues: Large ribosomal subunit protein uL13 (142 aa).

This sequence belongs to the universal ribosomal protein uL13 family. Part of the 50S ribosomal subunit.

This protein is one of the early assembly proteins of the 50S ribosomal subunit, although it is not seen to bind rRNA by itself. It is important during the early stages of 50S assembly. The chain is Large ribosomal subunit protein uL13 from Cupriavidus metallidurans (strain ATCC 43123 / DSM 2839 / NBRC 102507 / CH34) (Ralstonia metallidurans).